A 402-amino-acid chain; its full sequence is Arginine biosynthesis bifunctional protein ArgJ (402 aa).

Substrate-binding residues include T152, K178, T189, E275, N397, and T402. The active-site Nucleophile is the T189.

This sequence belongs to the ArgJ family. As to quaternary structure, heterotetramer of two alpha and two beta chains.

The protein resides in the cytoplasm. It carries out the reaction N(2)-acetyl-L-ornithine + L-glutamate = N-acetyl-L-glutamate + L-ornithine. It catalyses the reaction L-glutamate + acetyl-CoA = N-acetyl-L-glutamate + CoA + H(+). Its pathway is amino-acid biosynthesis; L-arginine biosynthesis; L-ornithine and N-acetyl-L-glutamate from L-glutamate and N(2)-acetyl-L-ornithine (cyclic): step 1/1. It participates in amino-acid biosynthesis; L-arginine biosynthesis; N(2)-acetyl-L-ornithine from L-glutamate: step 1/4. Catalyzes two activities which are involved in the cyclic version of arginine biosynthesis: the synthesis of N-acetylglutamate from glutamate and acetyl-CoA as the acetyl donor, and of ornithine by transacetylation between N(2)-acetylornithine and glutamate. This is Arginine biosynthesis bifunctional protein ArgJ from Lactiplantibacillus plantarum (strain ATCC BAA-793 / NCIMB 8826 / WCFS1) (Lactobacillus plantarum).